A 252-amino-acid chain; its full sequence is E3 ubiquitin-protein ligase MARCHF3 (252 aa).

An RING-CH-type zinc finger spans residues 62 to 122; sequence SSFNDHPMCR…ELCHFRFSVE (61 aa). Zn(2+)-binding residues include C70, C73, C86, C88, H96, C99, C112, and C115. Helical transmembrane passes span 144–164 and 181–201; these read LFGD…SGWL and AVGL…WTLV.

It is found in the cytoplasmic vesicle membrane. It localises to the early endosome membrane. It carries out the reaction S-ubiquitinyl-[E2 ubiquitin-conjugating enzyme]-L-cysteine + [acceptor protein]-L-lysine = [E2 ubiquitin-conjugating enzyme]-L-cysteine + N(6)-ubiquitinyl-[acceptor protein]-L-lysine.. The protein operates within protein modification; protein ubiquitination. In terms of biological role, E3 ubiquitin-protein ligase which may be involved in endosomal trafficking. E3 ubiquitin ligases accept ubiquitin from an E2 ubiquitin-conjugating enzyme in the form of a thioester and then directly transfer the ubiquitin to targeted substrates. The chain is E3 ubiquitin-protein ligase MARCHF3 (marchf3) from Xenopus laevis (African clawed frog).